The following is a 338-amino-acid chain: DNA-directed RNA polymerase subunit alpha (338 aa).

The tract at residues 1-226 is alpha N-terminal domain (alpha-NTD); the sequence is MLIAQRPTLT…ELFGLTRELN (226 aa). The segment at 243-338 is alpha C-terminal domain (alpha-CTD); it reads YAESLGTPVE…DDDYAETEQY (96 aa). The interval 319–338 is disordered; it reads AAAEAYDEANDDDYAETEQY. Residues 323-338 show a composition bias toward acidic residues; it reads AYDEANDDDYAETEQY.

The protein belongs to the RNA polymerase alpha chain family. As to quaternary structure, homodimer. The RNAP catalytic core consists of 2 alpha, 1 beta, 1 beta' and 1 omega subunit. When a sigma factor is associated with the core the holoenzyme is formed, which can initiate transcription.

The enzyme catalyses RNA(n) + a ribonucleoside 5'-triphosphate = RNA(n+1) + diphosphate. Its function is as follows. DNA-dependent RNA polymerase catalyzes the transcription of DNA into RNA using the four ribonucleoside triphosphates as substrates. This chain is DNA-directed RNA polymerase subunit alpha, found in Cutibacterium acnes (strain DSM 16379 / KPA171202) (Propionibacterium acnes).